The sequence spans 53 residues: uncharacterized protein (53 aa).

The protein localises to the plastid. It localises to the chloroplast. This is an uncharacterized protein from Guillardia theta (Cryptophyte).